A 340-amino-acid chain; its full sequence is Adenosine kinase (340 aa).

Residue D292 is part of the active site.

Belongs to the carbohydrate kinase PfkB family. It depends on Mg(2+) as a cofactor.

The enzyme catalyses adenosine + ATP = AMP + ADP + H(+). It functions in the pathway purine metabolism; AMP biosynthesis via salvage pathway; AMP from adenosine: step 1/1. This chain is Adenosine kinase (ado1), found in Schizosaccharomyces pombe (strain 972 / ATCC 24843) (Fission yeast).